A 462-amino-acid polypeptide reads, in one-letter code: MQEGKISQIIGPVVDVDFQEGGLPAILDALTVARPDGTKLVLETQQHLGEERVRTISMDATDGLVRGMPVINTGKPIQVPVGPNVLGRMLNVVGDPIDGKGPVKSEKSYSIHRPTPKFDVLSTKSEMFETGIKVIDLLEPYSRGGKTGLFGGAGVGKTVLIMELINNIAKQQSGFSVFAGVGERTREGNDLWEEMKESGVIDKTALVFGQMNEPPGARARVALTGLSIAEYFRDEENRDVLLFIDNIFRFTQAGSEVSALLGRMPSAVGYQPTLGTEMGELQDRIVSTNKGSVTSVQAIYVPADDLTDPAPATAFTHLDATTVLSRSIAELGIYPAVDPLDSTSRILDPNIVGDEHYNTAQAVKSLLQRYKDLQDIIAILGMDELSDEDKLTVSRARKIQRFLSQPFFVAEAFTGLEGKYVKLEDTIKGFNEIIDGKHDDLPESAFYLVGTIEEAVEKAKTL.

151–158 (GGAGVGKT) is a binding site for ATP.

This sequence belongs to the ATPase alpha/beta chains family. In terms of assembly, F-type ATPases have 2 components, CF(1) - the catalytic core - and CF(0) - the membrane proton channel. CF(1) has five subunits: alpha(3), beta(3), gamma(1), delta(1), epsilon(1). CF(0) has four main subunits: a(1), b(1), b'(1) and c(9-12).

The protein localises to the cell inner membrane. The enzyme catalyses ATP + H2O + 4 H(+)(in) = ADP + phosphate + 5 H(+)(out). Its function is as follows. Produces ATP from ADP in the presence of a proton gradient across the membrane. The catalytic sites are hosted primarily by the beta subunits. This is ATP synthase subunit beta from Chlorobium phaeobacteroides (strain BS1).